We begin with the raw amino-acid sequence, 162 residues long: Phosphopantetheine adenylyltransferase (162 aa).

Residue Thr14 participates in substrate binding. Residues 14 to 15 (TF) and His22 contribute to the ATP site. Residues Lys46, Leu78, and Arg92 each contribute to the substrate site. ATP contacts are provided by residues 93-95 (GLR), Glu103, and 128-134 (HSFISSS).

The protein belongs to the bacterial CoaD family. Homohexamer. The cofactor is Mg(2+).

It is found in the cytoplasm. The catalysed reaction is (R)-4'-phosphopantetheine + ATP + H(+) = 3'-dephospho-CoA + diphosphate. Its pathway is cofactor biosynthesis; coenzyme A biosynthesis; CoA from (R)-pantothenate: step 4/5. Its function is as follows. Reversibly transfers an adenylyl group from ATP to 4'-phosphopantetheine, yielding dephospho-CoA (dPCoA) and pyrophosphate. The sequence is that of Phosphopantetheine adenylyltransferase from Xylella fastidiosa (strain M23).